The chain runs to 181 residues: uncharacterized protein (181 aa).

This is an uncharacterized protein from Methanocaldococcus jannaschii (strain ATCC 43067 / DSM 2661 / JAL-1 / JCM 10045 / NBRC 100440) (Methanococcus jannaschii).